The chain runs to 221 residues: Enolase-phosphatase E1 (221 aa).

Belongs to the HAD-like hydrolase superfamily. MasA/MtnC family. In terms of assembly, monomer. The cofactor is Mg(2+).

The enzyme catalyses 5-methylsulfanyl-2,3-dioxopentyl phosphate + H2O = 1,2-dihydroxy-5-(methylsulfanyl)pent-1-en-3-one + phosphate. The protein operates within amino-acid biosynthesis; L-methionine biosynthesis via salvage pathway; L-methionine from S-methyl-5-thio-alpha-D-ribose 1-phosphate: step 3/6. Its pathway is amino-acid biosynthesis; L-methionine biosynthesis via salvage pathway; L-methionine from S-methyl-5-thio-alpha-D-ribose 1-phosphate: step 4/6. Its function is as follows. Bifunctional enzyme that catalyzes the enolization of 2,3-diketo-5-methylthiopentyl-1-phosphate (DK-MTP-1-P) into the intermediate 2-hydroxy-3-keto-5-methylthiopentenyl-1-phosphate (HK-MTPenyl-1-P), which is then dephosphorylated to form the acireductone 1,2-dihydroxy-3-keto-5-methylthiopentene (DHK-MTPene). In Hydrogenobaculum sp. (strain Y04AAS1), this protein is Enolase-phosphatase E1.